We begin with the raw amino-acid sequence, 116 residues long: Nucleoid-associated protein SACE_0254 (116 aa).

The disordered stretch occupies residues 90-116; sequence LQQEKMGPVTGALGGGQGLGGLGLPGL. A compositionally biased stretch (gly residues) spans 101 to 116; the sequence is ALGGGQGLGGLGLPGL.

Belongs to the YbaB/EbfC family. Homodimer.

The protein localises to the cytoplasm. The protein resides in the nucleoid. In terms of biological role, binds to DNA and alters its conformation. May be involved in regulation of gene expression, nucleoid organization and DNA protection. This is Nucleoid-associated protein SACE_0254 from Saccharopolyspora erythraea (strain ATCC 11635 / DSM 40517 / JCM 4748 / NBRC 13426 / NCIMB 8594 / NRRL 2338).